The primary structure comprises 498 residues: Protein flp (498 aa).

The next 4 membrane-spanning stretches (helical) occupy residues 6 to 26, 389 to 409, 433 to 453, and 471 to 491; these read LYFLSISIIILVAISIAIYIT, FNIVTVLMTTLILLAFIFSAY, LSLCICIALALILYALPYLIL, and LALITTLIALFSTLIVILLFL.

The protein resides in the cell membrane. Its precise function is unknown. Has no penicillin-binding activity and is not involved in methicillin resistance. The sequence is that of Protein flp (flp) from Staphylococcus aureus (strain NCTC 8325 / PS 47).